A 190-amino-acid polypeptide reads, in one-letter code: Ribosome hibernation promotion factor (190 aa).

The protein belongs to the HPF/YfiA ribosome-associated protein family. Long HPF subfamily. As to quaternary structure, interacts with 100S ribosomes.

It is found in the cytoplasm. Required for dimerization of active 70S ribosomes into 100S ribosomes in stationary phase; 100S ribosomes are translationally inactive and sometimes present during exponential growth. The protein is Ribosome hibernation promotion factor of Rhizobium meliloti (strain 1021) (Ensifer meliloti).